Here is a 176-residue protein sequence, read N- to C-terminus: NAD(P)H-quinone oxidoreductase subunit 6, chloroplastic (176 aa).

5 helical membrane-spanning segments follow: residues 10–30, 32–52, 61–81, 92–112, and 152–172; these read FLLVFLGSGLLVGGLGVVLLP, PIFSAFSLGFVLVCISLLYIL, AQLLIYVGAINVLIIFAVMFM, LWTVGNGITSLVCTTILFLLM, and FFLPFELISIILLVALIGAIS.

The protein belongs to the complex I subunit 6 family. In terms of assembly, NDH is composed of at least 16 different subunits, 5 of which are encoded in the nucleus.

Its subcellular location is the plastid. It localises to the chloroplast thylakoid membrane. It catalyses the reaction a plastoquinone + NADH + (n+1) H(+)(in) = a plastoquinol + NAD(+) + n H(+)(out). The catalysed reaction is a plastoquinone + NADPH + (n+1) H(+)(in) = a plastoquinol + NADP(+) + n H(+)(out). Functionally, NDH shuttles electrons from NAD(P)H:plastoquinone, via FMN and iron-sulfur (Fe-S) centers, to quinones in the photosynthetic chain and possibly in a chloroplast respiratory chain. The immediate electron acceptor for the enzyme in this species is believed to be plastoquinone. Couples the redox reaction to proton translocation, and thus conserves the redox energy in a proton gradient. This Capsella bursa-pastoris (Shepherd's purse) protein is NAD(P)H-quinone oxidoreductase subunit 6, chloroplastic (ndhG).